A 172-amino-acid polypeptide reads, in one-letter code: Epididymal secretory protein 4 (172 aa).

A signal peptide spans methionine 1–alanine 21. Cysteine 82 and cysteine 167 are disulfide-bonded.

This sequence belongs to the calycin superfamily. Lipocalin family. Secreted by the epididymal epithelial cells.

The protein localises to the secreted. It is found in the extracellular space. Functionally, could transport small hydrophobic molecules into the epididymal fluid during the sperm maturation. Binds to the head region of spermatozoa and plays a key role in sperm maturation. The polypeptide is Epididymal secretory protein 4 (Zootoca vivipara (Common lizard)).